The sequence spans 517 residues: Apolipoprotein N-acyltransferase (517 aa).

7 helical membrane-spanning segments follow: residues 5–25 (SFFS…ATLT), 26–46 (FAPY…LWLL), 55–75 (GLIG…WVHV), 90–110 (FLMS…GALF), 128–148 (VIWL…PWLW), 162–182 (APIL…GALV), and 193–213 (LMVP…SWVV). The CN hydrolase domain occupies 225-471 (IQGNVPQELK…TAVLRATITP (247 aa)). Residue Glu264 is the Proton acceptor of the active site. The active site involves Lys330. The active-site Nucleophile is the Cys382.

The protein belongs to the CN hydrolase family. Apolipoprotein N-acyltransferase subfamily.

It is found in the cell inner membrane. The enzyme catalyses N-terminal S-1,2-diacyl-sn-glyceryl-L-cysteinyl-[lipoprotein] + a glycerophospholipid = N-acyl-S-1,2-diacyl-sn-glyceryl-L-cysteinyl-[lipoprotein] + a 2-acyl-sn-glycero-3-phospholipid + H(+). It functions in the pathway protein modification; lipoprotein biosynthesis (N-acyl transfer). Catalyzes the phospholipid dependent N-acylation of the N-terminal cysteine of apolipoprotein, the last step in lipoprotein maturation. This chain is Apolipoprotein N-acyltransferase, found in Photobacterium profundum (strain SS9).